A 357-amino-acid polypeptide reads, in one-letter code: uncharacterized protein (357 aa).

This is an uncharacterized protein from Caenorhabditis elegans.